We begin with the raw amino-acid sequence, 296 residues long: Probable 6-phosphogluconolactonase 1 (296 aa).

It belongs to the glucosamine/galactosamine-6-phosphate isomerase family. 6-phosphogluconolactonase subfamily.

It catalyses the reaction 6-phospho-D-glucono-1,5-lactone + H2O = 6-phospho-D-gluconate + H(+). The protein operates within carbohydrate degradation; pentose phosphate pathway; D-ribulose 5-phosphate from D-glucose 6-phosphate (oxidative stage): step 2/3. Hydrolysis of 6-phosphogluconolactone to 6-phosphogluconate. This chain is Probable 6-phosphogluconolactonase 1, found in Oryza sativa subsp. japonica (Rice).